We begin with the raw amino-acid sequence, 57 residues long: Large ribosomal subunit protein bL32 (57 aa).

The protein belongs to the bacterial ribosomal protein bL32 family.

This is Large ribosomal subunit protein bL32 from Bacillus licheniformis (strain ATCC 14580 / DSM 13 / JCM 2505 / CCUG 7422 / NBRC 12200 / NCIMB 9375 / NCTC 10341 / NRRL NRS-1264 / Gibson 46).